The following is a 354-amino-acid chain: Selenide, water dikinase (354 aa).

The active site involves Cys23. ATP is bound by residues Lys26 and 54-56 (TAD). Asp57 is a binding site for Mg(2+). Residues Asp74, Asp97, and 145 to 147 (GHS) contribute to the ATP site. A Mg(2+)-binding site is contributed by Asp97. Residue Asp233 participates in Mg(2+) binding.

Belongs to the selenophosphate synthase 1 family. Class I subfamily. Homodimer. Mg(2+) is required as a cofactor.

It catalyses the reaction hydrogenselenide + ATP + H2O = selenophosphate + AMP + phosphate + 2 H(+). Its function is as follows. Synthesizes selenophosphate from selenide and ATP. This is Selenide, water dikinase from Paraburkholderia xenovorans (strain LB400).